Reading from the N-terminus, the 192-residue chain is MGVKVGVLALQGDVAEHIAAFREALAERPGSSVAPIRRAEDLADLDALAIPGGESTTISRLMGKNGLYEPVAEFEGGVFATCAGMVLSADRVDDPRVRPLSLIPMHVARNAFGRQVDSRETMLEVAGLAEPFRAVFIRAPVATEAGDGVEVLARIPEGIVAVRHGRHMAFAFHPELGGDLRLHRVFLEGLEV.

53-55 (GES) is a binding site for L-glutamine. The active-site Nucleophile is the C82. L-glutamine-binding positions include R109 and 137 to 138 (IR). Residues H173 and E175 each act as charge relay system in the active site.

The protein belongs to the glutaminase PdxT/SNO family. In the presence of PdxS, forms a dodecamer of heterodimers. Only shows activity in the heterodimer.

It catalyses the reaction aldehydo-D-ribose 5-phosphate + D-glyceraldehyde 3-phosphate + L-glutamine = pyridoxal 5'-phosphate + L-glutamate + phosphate + 3 H2O + H(+). The enzyme catalyses L-glutamine + H2O = L-glutamate + NH4(+). It participates in cofactor biosynthesis; pyridoxal 5'-phosphate biosynthesis. Catalyzes the hydrolysis of glutamine to glutamate and ammonia as part of the biosynthesis of pyridoxal 5'-phosphate. The resulting ammonia molecule is channeled to the active site of PdxS. The chain is Pyridoxal 5'-phosphate synthase subunit PdxT from Methanoculleus marisnigri (strain ATCC 35101 / DSM 1498 / JR1).